We begin with the raw amino-acid sequence, 503 residues long: Probable DNA ligase (503 aa).

Glu210 contacts ATP. Lys212 functions as the N6-AMP-lysine intermediate in the catalytic mechanism. ATP contacts are provided by Arg217, Arg232, Glu261, Phe296, Arg367, and Lys373.

Belongs to the ATP-dependent DNA ligase family. Requires Mg(2+) as cofactor.

It catalyses the reaction ATP + (deoxyribonucleotide)n-3'-hydroxyl + 5'-phospho-(deoxyribonucleotide)m = (deoxyribonucleotide)n+m + AMP + diphosphate.. DNA ligase that seals nicks in double-stranded DNA during DNA replication, DNA recombination and DNA repair. The chain is Probable DNA ligase from Rhodococcus jostii (strain RHA1).